Reading from the N-terminus, the 237-residue chain is MGQKINPIGFRLGINRTWDSRWFADNAEYGQLLHEDLKIRAYLMEELKAAGIAKVVIERPHKKCRVTIHSARPGLIIGKKGADIEKLRKKLSEMTNSETHLNIVEVRKPEVDATLVAQSIAQQLERRVAFRRAMKRAVQSAMRLGAEGIKITCAGRLGGAEIARTEWYREGRVPLHTLRADIDYGTAEAETAFGICGVKVWIFKGEILEHDPMASERRATESDNQGGGGRDRRRENA.

Positions 39 to 107 constitute a KH type-2 domain; sequence IRAYLMEELK…ETHLNIVEVR (69 aa). Residues 213-237 form a disordered region; it reads MASERRATESDNQGGGGRDRRRENA.

The protein belongs to the universal ribosomal protein uS3 family. Part of the 30S ribosomal subunit. Forms a tight complex with proteins S10 and S14.

In terms of biological role, binds the lower part of the 30S subunit head. Binds mRNA in the 70S ribosome, positioning it for translation. In Sinorhizobium fredii (strain NBRC 101917 / NGR234), this protein is Small ribosomal subunit protein uS3.